Consider the following 137-residue polypeptide: Large ribosomal subunit protein mL41 (137 aa).

The N-terminal 13 residues, 1–13 (MGVLAAAARCLVR), are a transit peptide targeting the mitochondrion.

This sequence belongs to the mitochondrion-specific ribosomal protein mL41 family. Component of the mitochondrial large ribosomal subunit (mt-LSU). Mature mammalian 55S mitochondrial ribosomes consist of a small (28S) and a large (39S) subunit. The 28S small subunit contains a 12S ribosomal RNA (12S mt-rRNA) and 30 different proteins. The 39S large subunit contains a 16S rRNA (16S mt-rRNA), a copy of mitochondrial valine transfer RNA (mt-tRNA(Val)), which plays an integral structural role, and 52 different proteins. Interacts with BCL2. Present in kidney, liver, thymus and testis, and at lower level in brain and spleen (at protein level).

It localises to the mitochondrion. Functionally, component of the mitochondrial ribosome large subunit. Also involved in apoptosis and cell cycle. Enhances p53/TP53 stability, thereby contributing to p53/TP53-induced apoptosis in response to growth-inhibitory condition. Enhances p53/TP53 translocation to the mitochondria. Has the ability to arrest the cell cycle at the G1 phase, possibly by stabilizing the CDKN1A and CDKN1B (p27Kip1) proteins. This is Large ribosomal subunit protein mL41 (MRPL41) from Homo sapiens (Human).